The following is a 238-amino-acid chain: Small ribosomal subunit protein uS2 (238 aa).

This sequence belongs to the universal ribosomal protein uS2 family.

The polypeptide is Small ribosomal subunit protein uS2 (Moorella thermoacetica (strain ATCC 39073 / JCM 9320)).